The sequence spans 146 residues: uncharacterized protein (146 aa).

Residues 119–128 (AQADLEHEES) show a composition bias toward basic and acidic residues. The tract at residues 119–146 (AQADLEHEESASIDQDEMVAIETRKTKK) is disordered.

This is an uncharacterized protein from Schizosaccharomyces pombe (strain 972 / ATCC 24843) (Fission yeast).